Reading from the N-terminus, the 453-residue chain is Oocyte zinc finger protein XlCOF6 (453 aa).

14 C2H2-type zinc fingers span residues 6–29 (FICSKCGETFTVNSHLLTHLCGKH), 67–89 (FTCTECGKSFSERDNLKCHHKTH), 95–117 (FTCMECGKGFSVKSSLKHHYKAH), 123–145 (VRCTECGKEFTSKYYLNVHKRLH), 151–173 (FTCTQCGKCFSDKSALKYHHKTH), 179–201 (FACTECGKSFTEKSILQKHQRTH), 207–229 (FTCTECGKSYSAMSTLECHRRTH), 235–257 (FTCTECGKSFTEKSILRKHHKTH), 263–285 (FTCTECGKSCTEKSILRKHQITH), 291–313 (FTCTECGKCFSDKTALKYHHKTH), 319–341 (FACTECGKSFTDKSILRNHQRTH), 375–397 (FTCTECGKSFTEKSILRKHHKTH), 403–425 (FTCTECGKSFTHKSILQKHQRTH), and 431–453 (FTCTECGKCFSDKTAIKYHRITH).

It belongs to the krueppel C2H2-type zinc-finger protein family.

It localises to the nucleus. May be involved in transcriptional regulation. The protein is Oocyte zinc finger protein XlCOF6 of Xenopus laevis (African clawed frog).